A 106-amino-acid chain; its full sequence is MICOS complex subunit MIC12 (106 aa).

A helical membrane pass occupies residues 11 to 27 (VKWTLSVGVIGSVFYLY).

The protein belongs to the MICOS complex subunit Mic12 family. Component of the mitochondrial contact site and cristae organizing system (MICOS) complex.

The protein localises to the mitochondrion inner membrane. Functionally, component of the MICOS complex, a large protein complex of the mitochondrial inner membrane that plays crucial roles in the maintenance of crista junctions, inner membrane architecture, and formation of contact sites to the outer membrane. The protein is MICOS complex subunit MIC12 (AIM5) of Saccharomyces cerevisiae (strain RM11-1a) (Baker's yeast).